The sequence spans 336 residues: Glycerol-3-phosphate dehydrogenase [NAD(P)+] (336 aa).

NADPH is bound by residues S11, W12, R32, and K106. The sn-glycerol 3-phosphate site is built by K106 and G136. A140 lines the NADPH pocket. K191, D244, S254, R255, and N256 together coordinate sn-glycerol 3-phosphate. The active-site Proton acceptor is the K191. R255 contacts NADPH. NADPH is bound by residues V279 and E281.

This sequence belongs to the NAD-dependent glycerol-3-phosphate dehydrogenase family.

Its subcellular location is the cytoplasm. The enzyme catalyses sn-glycerol 3-phosphate + NAD(+) = dihydroxyacetone phosphate + NADH + H(+). The catalysed reaction is sn-glycerol 3-phosphate + NADP(+) = dihydroxyacetone phosphate + NADPH + H(+). It functions in the pathway membrane lipid metabolism; glycerophospholipid metabolism. Its function is as follows. Catalyzes the reduction of the glycolytic intermediate dihydroxyacetone phosphate (DHAP) to sn-glycerol 3-phosphate (G3P), the key precursor for phospholipid synthesis. The protein is Glycerol-3-phosphate dehydrogenase [NAD(P)+] of Frankia casuarinae (strain DSM 45818 / CECT 9043 / HFP020203 / CcI3).